The sequence spans 323 residues: G patch domain-containing protein 4 (323 aa).

Disordered stretches follow at residues 1–32 (MSAS…GLGR), 84–110 (GVKV…SNRN), 124–185 (PGGE…SAKL), and 197–323 (AKYG…NKSE). 2 stretches are compositionally biased toward basic and acidic residues: residues 9-32 (SQGR…GLGR) and 84-94 (GVKVNRTKDDD). Residues 11–57 (GRRFAEQQMHKHGWTEGKGLGRRENGISEAIKVKVKCDHAGVGHNSA) form the G-patch domain. The span at 131-141 (KEPSSSESSDS) shows a compositional bias: low complexity. Positions 252 to 261 (EREEEEEEES) are enriched in acidic residues. Basic residues predominate over residues 281-291 (SKKKKSKKKHR). Residues 294–306 (SASPQEEQVTEST) are compositionally biased toward polar residues. Basic residues predominate over residues 311 to 323 (KPKKKKKKKNKSE).

This is G patch domain-containing protein 4 (gpatch4) from Xenopus tropicalis (Western clawed frog).